The sequence spans 148 residues: UPF0179 protein Mboo_1959 (148 aa).

The protein belongs to the UPF0179 family.

The polypeptide is UPF0179 protein Mboo_1959 (Methanoregula boonei (strain DSM 21154 / JCM 14090 / 6A8)).